The sequence spans 197 residues: A-kinase anchor protein 14 (197 aa).

2 stretches are compositionally biased toward polar residues: residues Met-1–Lys-11 and Ala-19–Asp-29. Positions Met-1 to Asp-29 are disordered. The interval Glu-35 to Val-52 is RII-binding.

Binds to type II regulatory subunits (RII). In terms of tissue distribution, present in cilia (at protein level). Expressed in tissues containing axoneme-based organelles (cilia and/or flagella): trachea and testis. Highly expressed in airway cilia.

The protein localises to the cytoplasm. In terms of biological role, binds to type II regulatory subunits of protein kinase A and anchors/targets them. The protein is A-kinase anchor protein 14 (AKAP14) of Homo sapiens (Human).